The following is a 764-amino-acid chain: DNA polymerase 3 (764 aa).

The protein belongs to the DNA polymerase type-B family.

It carries out the reaction DNA(n) + a 2'-deoxyribonucleoside 5'-triphosphate = DNA(n+1) + diphosphate. The protein is DNA polymerase 3 (dpo3) of Saccharolobus solfataricus (strain ATCC 35092 / DSM 1617 / JCM 11322 / P2) (Sulfolobus solfataricus).